Here is a 140-residue protein sequence, read N- to C-terminus: Small ribosomal subunit protein uS12 (140 aa).

Positions 1–44 (MPTFNQLVRKGRKTMEKNSQAPALQKGFNSLRKKTTDASAPQKR) are disordered. The residue at position 102 (Asp102) is a 3-methylthioaspartic acid. The interval 120-140 (VAKRRQARSKYGAKRPKEAKK) is disordered. Residues 121–140 (AKRRQARSKYGAKRPKEAKK) show a composition bias toward basic residues.

It belongs to the universal ribosomal protein uS12 family. In terms of assembly, part of the 30S ribosomal subunit. Contacts proteins S8 and S17. May interact with IF1 in the 30S initiation complex.

With S4 and S5 plays an important role in translational accuracy. In terms of biological role, interacts with and stabilizes bases of the 16S rRNA that are involved in tRNA selection in the A site and with the mRNA backbone. Located at the interface of the 30S and 50S subunits, it traverses the body of the 30S subunit contacting proteins on the other side and probably holding the rRNA structure together. The combined cluster of proteins S8, S12 and S17 appears to hold together the shoulder and platform of the 30S subunit. The chain is Small ribosomal subunit protein uS12 from Lachnoclostridium phytofermentans (strain ATCC 700394 / DSM 18823 / ISDg) (Clostridium phytofermentans).